Here is a 148-residue protein sequence, read N- to C-terminus: UPF0756 membrane protein KPK_3307 (148 aa).

The next 4 membrane-spanning stretches (helical) occupy residues alanine 14–valine 34, leucine 51–leucine 71, leucine 86–methionine 106, and valine 121–isoleucine 141.

It belongs to the UPF0756 family.

It is found in the cell membrane. The protein is UPF0756 membrane protein KPK_3307 of Klebsiella pneumoniae (strain 342).